Here is a 1333-residue protein sequence, read N- to C-terminus: Aldehyde oxidase 1 (1333 aa).

The region spanning 4–91 (PQLLFYVNGQ…GTAVTTVEGI (88 aa)) is the 2Fe-2S ferredoxin-type domain. Residues cysteine 43, cysteine 48, cysteine 51, and cysteine 73 each coordinate [2Fe-2S] cluster. Glutamine 112 contributes to the Mo-molybdopterin binding site. [2Fe-2S] cluster contacts are provided by cysteine 113, cysteine 116, cysteine 148, and cysteine 150. Position 150 (cysteine 150) interacts with Mo-molybdopterin. The FAD-binding PCMH-type domain occupies 235–420 (FYSNRMTWIS…VSVNIPCSRK (186 aa)). FAD contacts are provided by residues 263-270 (IVMGYTSV), alanine 344, serine 353, histidine 357, aspartate 366, and leucine 410. Residues 801 to 802 (AF) and methionine 1042 each bind Mo-molybdopterin. Serine 1063 is subject to Phosphoserine. Mo-molybdopterin-binding positions include 1083-1086 (GSVV), glutamine 1198, and leucine 1263. The active-site Proton acceptor; for azaheterocycle hydroxylase activity is the glutamate 1265.

This sequence belongs to the xanthine dehydrogenase family. Homodimer. [2Fe-2S] cluster is required as a cofactor. FAD serves as cofactor. It depends on Mo-molybdopterin as a cofactor. In terms of processing, the N-terminus is blocked. Expression in liver (at protein level). Also detected in heart, lung, spleen and kidney.

It localises to the cytoplasm. It carries out the reaction an aldehyde + O2 + H2O = a carboxylate + H2O2 + H(+). It catalyses the reaction retinal + O2 + H2O = retinoate + H2O2 + H(+). With respect to regulation, inhibited by menadione and isovanillin. Not inhibited by allopurinol, a xanthine dehydrogenase potent inhibitor. Inhibited by the flavonoids quercetin, myricetin and genistein. Nitric oxide generation is inhibited by raloxifene and competitively inhibited by an increase in oxygen levels. Its function is as follows. Oxidase with broad substrate specificity, oxidizing aromatic azaheterocycles, such as N1-methylnicotinamide, N-methylphthalazinium and phthalazine, as well as aldehydes, such as benzaldehyde, retinal, pyridoxal, and vanillin. Plays a role in the metabolism of xenobiotics and drugs containing aromatic azaheterocyclic substituents. Participates in the bioactivation of prodrugs such as famciclovir, catalyzing the oxidation step from 6-deoxypenciclovir to penciclovir, which is a potent antiviral agent. Is probably involved in the regulation of reactive oxygen species homeostasis. Is a prominent source of superoxide generation via the one-electron reduction of molecular oxygen. Also catalyzes nitric oxide (NO) production; under anaerobic conditions, reduces nitrite to NO with NADH or aldehyde as electron donor, but under aerobic conditions, NADH is the preferred substrate. These reactions may be catalyzed by several isozymes. May play a role in adipogenesis. The protein is Aldehyde oxidase 1 of Rattus norvegicus (Rat).